The chain runs to 366 residues: Erythronate-4-phosphate dehydrogenase (366 aa).

Substrate contacts are provided by Ser-46 and Thr-67. Positions 147 and 175 each coordinate NAD(+). Arg-208 is a catalytic residue. Asp-228 serves as a coordination point for NAD(+). Glu-233 is a catalytic residue. His-250 serves as the catalytic Proton donor. Gly-253 lines the NAD(+) pocket. Tyr-254 is a binding site for substrate.

It belongs to the D-isomer specific 2-hydroxyacid dehydrogenase family. PdxB subfamily. As to quaternary structure, homodimer.

It localises to the cytoplasm. The enzyme catalyses 4-phospho-D-erythronate + NAD(+) = (R)-3-hydroxy-2-oxo-4-phosphooxybutanoate + NADH + H(+). It functions in the pathway cofactor biosynthesis; pyridoxine 5'-phosphate biosynthesis; pyridoxine 5'-phosphate from D-erythrose 4-phosphate: step 2/5. Catalyzes the oxidation of erythronate-4-phosphate to 3-hydroxy-2-oxo-4-phosphonooxybutanoate. The sequence is that of Erythronate-4-phosphate dehydrogenase from Coxiella burnetii (strain RSA 331 / Henzerling II).